Here is a 995-residue protein sequence, read N- to C-terminus: Probable copper-transporting ATPase HMA5 (995 aa).

Residues Met1–Ser299 are Cytoplasmic-facing. 2 consecutive HMA domains span residues Ser51–Ser117 and Gln129–Val195. The Cu(+) site is built by Cys62, Cys65, Cys140, and Cys143. The HMA 3; degenerate domain occupies Ser204–Ser270. The helical transmembrane segment at Phe300 to Pro321 threads the bilayer. Topologically, residues Gly322–Ile340 are extracellular. Residues Ile341–Gly360 traverse the membrane as a helical segment. Topologically, residues Ser361 to Arg367 are cytoplasmic. The helical transmembrane segment at Gly368 to Leu388 threads the bilayer. Over Tyr389–Phe406 the chain is Extracellular. A helical transmembrane segment spans residues Glu407–Lys427. Residues Gly428 to Arg561 are Cytoplasmic-facing. Residues Ile562 to Ala584 form a helical membrane-spanning segment. The Extracellular portion of the chain corresponds to Gly585–Ala605. Residues Leu606 to Leu623 traverse the membrane as a helical segment. Residues Ala624 to Ile920 lie on the Cytoplasmic side of the membrane. Catalysis depends on Asp661, which acts as the 4-aspartylphosphate intermediate. Asp866 and Asp870 together coordinate Mg(2+). The helical transmembrane segment at Arg921–Gly940 threads the bilayer. Residues Val941–Pro952 lie on the Extracellular side of the membrane. The chain crosses the membrane as a helical span at residues Trp953 to Leu971. Residues Leu972–Val995 are Cytoplasmic-facing.

Belongs to the cation transport ATPase (P-type) (TC 3.A.3) family. Type IB subfamily. As to quaternary structure, interacts with ATX1. In terms of tissue distribution, expressed in roots and flowers.

The protein resides in the membrane. It carries out the reaction Cu(+)(in) + ATP + H2O = Cu(+)(out) + ADP + phosphate + H(+). Involved in copper import into the cell. May play a role in copper detoxification in roots. In Arabidopsis thaliana (Mouse-ear cress), this protein is Probable copper-transporting ATPase HMA5 (HMA5).